The primary structure comprises 389 residues: Spore coat polysaccharide biosynthesis protein SpsC (389 aa).

Position 187 is an N6-(pyridoxal phosphate)lysine (Lys-187).

It belongs to the DegT/DnrJ/EryC1 family. Pyridoxal 5'-phosphate is required as a cofactor.

Its pathway is spore coat biogenesis; spore coat polysaccharide biosynthesis. In Bacillus subtilis (strain 168), this protein is Spore coat polysaccharide biosynthesis protein SpsC (spsC).